Reading from the N-terminus, the 500-residue chain is NAD(P)H-quinone oxidoreductase chain 4, chloroplastic (500 aa).

15 helical membrane passes run 4-24 (FPWL…LFFF), 37-57 (ICIC…HFEL), 87-107 (IGPI…AWPV), 113-130 (LFYF…GSFS), 134-154 (LLLF…LLSM), 167-187 (FILY…GIGL), 207-227 (IALE…KSPI), 242-262 (HYST…YGLV), 272-292 (AHSI…IYAA), 305-325 (IAYS…SISD), 330-350 (GAIL…FLAG), 364-384 (MGGL…LSMA), 386-406 (LALP…GIIT), 417-437 (VITL…LSML), and 463-483 (FVAI…DFVF).

Belongs to the complex I subunit 4 family.

Its subcellular location is the plastid. It is found in the chloroplast thylakoid membrane. The catalysed reaction is a plastoquinone + NADH + (n+1) H(+)(in) = a plastoquinol + NAD(+) + n H(+)(out). The enzyme catalyses a plastoquinone + NADPH + (n+1) H(+)(in) = a plastoquinol + NADP(+) + n H(+)(out). This Cucumis sativus (Cucumber) protein is NAD(P)H-quinone oxidoreductase chain 4, chloroplastic.